A 696-amino-acid chain; its full sequence is C2 domain-containing protein 2 (696 aa).

A helical membrane pass occupies residues 8-28; the sequence is VQWLFLVSLFVAALGTVGLYL. Residues 45 to 238 form the SMP-LBD domain; that stretch reads EPDELRRRES…PTQVKEAQSL (194 aa). Phosphoserine is present on serine 54. The region spanning 241 to 357 is the C2 domain; it reads PSSTAQEPCP…RKQPNGPQTF (117 aa). Serine 436 carries the phosphoserine modification. Threonine 440 is modified (phosphothreonine). Residues 551 to 611 are disordered; the sequence is ATEASATTPP…DGDELSESSL (61 aa). A compositionally biased stretch (basic and acidic residues) spans 573–588; the sequence is KPRENDLDSWELEKES. Residue serine 581 is modified to Phosphoserine.

Its subcellular location is the membrane. This is C2 domain-containing protein 2 from Mus musculus (Mouse).